We begin with the raw amino-acid sequence, 830 residues long: Interleukin-4 receptor subunit alpha (830 aa).

The first 32 residues, 1-32 (MGWLCPGLTFSVSCLILVWAAGSGVTCVSPGG), serve as a signal peptide directing secretion. At 33-240 (VRVLEWPICL…NYYEEPLEQR (208 aa)) the chain is on the extracellular side. Residues Cys-41 and Cys-51 are joined by a disulfide bond. N-linked (GlcNAc...) asparagine glycosylation is found at Asn-60 and Asn-78. A disulfide bridge links Cys-82 with Cys-94. N-linked (GlcNAc...) asparagine glycans are attached at residues Asn-120, Asn-142, and Asn-170. One can recognise a Fibronectin type-III domain in the interval 133–232 (APRNLMVHAN…WSPSVKWLNY (100 aa)). Ser-172 carries the phosphoserine modification. N-linked (GlcNAc...) asparagine glycans are attached at residues Asn-184 and Asn-217. The WSXWS motif motif lies at 220-224 (WSEWS). The helical transmembrane segment at 241–264 (LPLGVSISCVVILIICLSCYFGII) threads the bilayer. The Cytoplasmic segment spans residues 265–830 (RIKKEWWDQI…SPGPACMDTS (566 aa)). A Box 1 motif motif is present at residues 270-278 (WWDQIPNPA). Residues 378 to 387 (ENEEEEEEED) are compositionally biased toward acidic residues. Disordered regions lie at residues 378 to 403 (ENEEEEEEEDKGSFCPSPENSGGSFQ) and 450 to 488 (MPWAEFPRVGSPEASSQGKEQPLNPEPSPQATPTQSLAS). Positions 444 to 564 (ENASAPMPWA…ETWEQILRQS (121 aa)) are required for IRS1 activation and IL4-induced cell growth. Residue Tyr-504 is modified to Phosphotyrosine. 2 disordered regions span residues 508–610 (STFL…EAGY) and 623–696 (CPGT…DGQK). Residues 518 to 534 (GELDSDPELAEALEEVE) show a composition bias toward acidic residues. Over residues 538 to 551 (PAAPQPSEPPPTLQ) the composition is skewed to pro residues. The interval 564–662 (SVLQRRAAPA…VPTPLFTFGL (99 aa)) is required for IL4-induced gene expression. A compositionally biased stretch (low complexity) spans 570–582 (AAPAPASGPSSSG). Phosphotyrosine is present on residues Tyr-583 and Tyr-610. Residues 623-635 (CPGTSGLEPSSGE) are compositionally biased toward polar residues. Tyr-638 bears the Phosphotyrosine mark. 2 stretches are compositionally biased toward pro residues: residues 646-655 (PGCPETPVPT) and 665-676 (EPPPSPQNPPFP). The ITIM motif motif lies at 716 to 721 (IVYSAL). Positions 811-830 (SQTPTAVAMLSPGPACMDTS) are disordered.

The protein belongs to the type I cytokine receptor family. Type 4 subfamily. In terms of assembly, the functional IL4 receptor is formed by initial binding of IL4 to IL4R. Subsequent recruitment to the complex of the common gamma chain, in immune cells, creates a type I receptor and, in non-immune cells, of IL13RA1 forms a type II receptor. IL4R can also interact with the IL13/IL13RA1 complex to form a similar type II receptor. Interacts with PIK3C3. Interacts with the SH2-containing phosphatases, PTPN6/SHIP1, PTPN11/SHIP2 and INPP5D/SHIP. Interacts with JAK1 through a Box 1-containing region; inhibited by SOCS5. Interacts with SOCS5; inhibits IL4 signaling. Interacts with JAK3. Interacts with CLM1. Interacts with IL13RA2. In terms of processing, on IL4 binding, phosphorylated on C-terminal tyrosine residues.

It is found in the membrane. Functionally, receptor for both interleukin 4 and interleukin 13. Couples to the JAK1/2/3-STAT6 pathway. The IL4 response is involved in promoting Th2 differentiation. The IL4/IL13 responses are involved in regulating IgE production and, chemokine and mucus production at sites of allergic inflammation. In certain cell types, can signal through activation of insulin receptor substrates, IRS1/IRS2. The protein is Interleukin-4 receptor subunit alpha (IL4R) of Sus scrofa (Pig).